Consider the following 445-residue polypeptide: Phosphoglucosamine mutase (445 aa).

The Phosphoserine intermediate role is filled by Ser-102. Residues Ser-102, Asp-241, Asp-243, and Asp-245 each coordinate Mg(2+). Position 102 is a phosphoserine (Ser-102).

The protein belongs to the phosphohexose mutase family. The cofactor is Mg(2+). In terms of processing, activated by phosphorylation.

It carries out the reaction alpha-D-glucosamine 1-phosphate = D-glucosamine 6-phosphate. Its function is as follows. Catalyzes the conversion of glucosamine-6-phosphate to glucosamine-1-phosphate. This Aliivibrio salmonicida (strain LFI1238) (Vibrio salmonicida (strain LFI1238)) protein is Phosphoglucosamine mutase.